A 465-amino-acid polypeptide reads, in one-letter code: UDP-N-acetylmuramate--L-alanine ligase (465 aa).

112 to 118 is an ATP binding site; sequence GTHGKTT.

The protein belongs to the MurCDEF family.

Its subcellular location is the cytoplasm. It catalyses the reaction UDP-N-acetyl-alpha-D-muramate + L-alanine + ATP = UDP-N-acetyl-alpha-D-muramoyl-L-alanine + ADP + phosphate + H(+). The protein operates within cell wall biogenesis; peptidoglycan biosynthesis. Cell wall formation. This is UDP-N-acetylmuramate--L-alanine ligase from Burkholderia multivorans (strain ATCC 17616 / 249).